A 1434-amino-acid polypeptide reads, in one-letter code: DNA-directed RNA polymerase subunit beta' (1434 aa).

Cys-70, Cys-72, Cys-85, and Cys-88 together coordinate Zn(2+). Mg(2+)-binding residues include Asp-460, Asp-462, and Asp-464. The Zn(2+) site is built by Cys-840, Cys-914, Cys-921, and Cys-924.

Belongs to the RNA polymerase beta' chain family. As to quaternary structure, the RNAP catalytic core consists of 2 alpha, 1 beta, 1 beta' and 1 omega subunit. When a sigma factor is associated with the core the holoenzyme is formed, which can initiate transcription. The cofactor is Mg(2+). Zn(2+) is required as a cofactor.

It catalyses the reaction RNA(n) + a ribonucleoside 5'-triphosphate = RNA(n+1) + diphosphate. DNA-dependent RNA polymerase catalyzes the transcription of DNA into RNA using the four ribonucleoside triphosphates as substrates. In Tolumonas auensis (strain DSM 9187 / NBRC 110442 / TA 4), this protein is DNA-directed RNA polymerase subunit beta'.